Reading from the N-terminus, the 74-residue chain is Invertase 3 (74 aa).

An N-terminal signal peptide occupies residues 1-19 (MLLQAFIFLLAGFAAKISA). Asn-23 is a glycosylation site (N-linked (GlcNAc...) asparagine). Substrate contacts are provided by residues 39–42 (WMND) and Gln-60. Asp-42 is a catalytic residue. Asn-64 carries N-linked (GlcNAc...) asparagine glycosylation.

The protein belongs to the glycosyl hydrolase 32 family.

The catalysed reaction is Hydrolysis of terminal non-reducing beta-D-fructofuranoside residues in beta-D-fructofuranosides.. This is Invertase 3 (SUC3) from Saccharomyces cerevisiae (Baker's yeast).